Consider the following 324-residue polypeptide: Dolichyl-phosphate beta-glucosyltransferase (324 aa).

Over 1–7 (MATLLLQ) the chain is Lumenal. Residues 8-28 (LLGLGVALAAAALILVSIVAF) form a helical membrane-spanning segment. Residues 29–324 (ITATKMPPCY…WRLKQTRKAS (296 aa)) are Cytoplasmic-facing.

Belongs to the glycosyltransferase 2 family.

It localises to the endoplasmic reticulum membrane. The catalysed reaction is a di-trans,poly-cis-dolichyl phosphate + UDP-alpha-D-glucose = a di-trans,poly-cis-dolichyl beta-D-glucosyl phosphate + UDP. Its pathway is protein modification; protein glycosylation. Its function is as follows. Dolichyl-phosphate beta-glucosyltransferase that operates in the biosynthetic pathway of dolichol-linked oligosaccharides, the glycan precursors employed in protein asparagine (N)-glycosylation. The assembly of dolichol-linked oligosaccharides begins on the cytosolic side of the endoplasmic reticulum membrane and finishes in its lumen. The sequential addition of sugars to dolichol pyrophosphate produces dolichol-linked oligosaccharides containing fourteen sugars, including two GlcNAcs, nine mannoses and three glucoses. Once assembled, the oligosaccharide is transferred from the lipid to nascent proteins by oligosaccharyltransferases. Dolichyl-phosphate beta-glucosyltransferase produces dolichyl beta-D-glucosyl phosphate/Dol-P-Glc, the glucose donor substrate used sequentially by ALG6, ALG8 and ALG10 to add glucose residues on top of the Man(9)GlcNAc(2)-PP-Dol structure. These are the three last steps in the biosynthetic pathway of dolichol-linked oligosaccharides to produce Glc(3)Man(9)GlcNAc(2)-PP-Dol. The enzyme is most probably active on the cytoplasmic side of the endoplasmic reticulum while its product Dol-P-Glc is the substrate for ALG6, ALG8 and ALG11 in the lumen of the endoplasmic reticulum. This Mus musculus (Mouse) protein is Dolichyl-phosphate beta-glucosyltransferase.